We begin with the raw amino-acid sequence, 335 residues long: Nucleoid-associated protein YejK (335 aa).

The protein belongs to the YejK family.

The protein resides in the cytoplasm. The protein localises to the nucleoid. In Escherichia coli (strain K12 / MC4100 / BW2952), this protein is Nucleoid-associated protein YejK.